The chain runs to 335 residues: MAAATAPKTMPSSVFAAALLLLAAAACQASPYYPLELGYYRYTCPQAEAIVKASMEKAIAQNPGNGAAVIRMLFHDCFVEGCDASVLLDPTPFSPTPEKLAAPNNPSLRGFELIDAIKDALEAACPGVVSCADIIAFAARDASCFLSQGKVSFDMPSGRLDGTFSNASESVKFLVPPTSNLSDLASSFAVKGMSLEDLVVLSGAHTVGRSHCSSFVSDRLDVPSDINPALAAFLRTRCPPNTTTSDDPTVMQDVVTPNAMDIQYYKNVLSHTVLFTSDAALLTSPETAKLVLDNAKIPGWWEDKFEKAMVKMASLEVKTGHQGQVRKNCRAINHY.

A signal peptide spans 1–29; it reads MAAATAPKTMPSSVFAAALLLLAAAACQA. Disulfide bonds link cysteine 44–cysteine 125, cysteine 77–cysteine 82, cysteine 131–cysteine 329, and cysteine 212–cysteine 238. Catalysis depends on histidine 75, which acts as the Proton acceptor. 5 residues coordinate Ca(2+): aspartate 76, valine 79, glycine 81, aspartate 83, and serine 85. 2 N-linked (GlcNAc...) asparagine glycosylation sites follow: asparagine 166 and asparagine 180. Histidine 205 contacts heme b. Threonine 206 contributes to the Ca(2+) binding site. N-linked (GlcNAc...) asparagine glycosylation occurs at asparagine 241. Ca(2+) is bound by residues aspartate 253, threonine 256, and aspartate 261.

The protein belongs to the peroxidase family. Classical plant (class III) peroxidase subfamily. It depends on heme b as a cofactor. Ca(2+) serves as cofactor. In terms of tissue distribution, expressed in the elongating region of young roots, and in root vascular tissues and epidermis.

The protein resides in the secreted. The enzyme catalyses 2 a phenolic donor + H2O2 = 2 a phenolic radical donor + 2 H2O. Removal of H(2)O(2), oxidation of toxic reductants, biosynthesis and degradation of lignin, suberization, auxin catabolism, response to environmental stresses such as wounding, pathogen attack and oxidative stress. These functions might be dependent on each isozyme/isoform in each plant tissue. This Zea mays (Maize) protein is Peroxidase 2 (PER2).